A 432-amino-acid polypeptide reads, in one-letter code: 3-phosphoshikimate 1-carboxyvinyltransferase (432 aa).

3-phosphoshikimate-binding residues include Lys22, Ser23, and Arg27. Position 22 (Lys22) interacts with phosphoenolpyruvate. Positions 96 and 127 each coordinate phosphoenolpyruvate. 3-phosphoshikimate is bound by residues Ser173, Ser174, Gln175, Ser201, Asp316, Asn339, and Lys343. Gln175 contacts phosphoenolpyruvate. Residue Asp316 is the Proton acceptor of the active site. Arg347, Arg391, and Lys416 together coordinate phosphoenolpyruvate.

It belongs to the EPSP synthase family. In terms of assembly, monomer.

Its subcellular location is the cytoplasm. The enzyme catalyses 3-phosphoshikimate + phosphoenolpyruvate = 5-O-(1-carboxyvinyl)-3-phosphoshikimate + phosphate. Its pathway is metabolic intermediate biosynthesis; chorismate biosynthesis; chorismate from D-erythrose 4-phosphate and phosphoenolpyruvate: step 6/7. Its function is as follows. Catalyzes the transfer of the enolpyruvyl moiety of phosphoenolpyruvate (PEP) to the 5-hydroxyl of shikimate-3-phosphate (S3P) to produce enolpyruvyl shikimate-3-phosphate and inorganic phosphate. This Histophilus somni (strain 2336) (Haemophilus somnus) protein is 3-phosphoshikimate 1-carboxyvinyltransferase.